The following is a 782-amino-acid chain: Coiled-coil alpha-helical rod protein 1 (782 aa).

Basic and acidic residues-rich tracts occupy residues 62-74 and 208-218; these read ERDV…EPGR and ETRRAGEAKEL. Disordered stretches follow at residues 62–82 and 177–218; these read ERDV…WGLE and EQLS…AKEL. Coiled coils occupy residues 111–303, 344–437, and 498–691; these read LRET…SLTH, LMVQ…NAVS, and VTDV…QQEG.

Found in all tissues tested, abundantly expressed in heart, liver, skeletal muscle, kidney and pancreas, and to a lesser extent in lung and placenta. Overexpressed in keratinocytes of psoriatic lesions.

It is found in the cytoplasm. It localises to the nucleus. May be a regulator of keratinocyte proliferation or differentiation. The protein is Coiled-coil alpha-helical rod protein 1 (CCHCR1) of Homo sapiens (Human).